A 492-amino-acid chain; its full sequence is MKNQLFIYNTLTGRKELFQSLYPKRVGLYVCGPTVYGDPHLGHARPAITFDILFRYLMHLNYKVRYVRNITDVGHLTSDSDLGEDKIARKARLEDLEPMEVVQHYLNLYHKTMDALNVLPPSIEPHASAHIIEQIQLIKEILEKGYAYESKGSVYFDVEKYNKKYNYGKLSGQNIADMLNTTRKLDGQEGKRNPIDFALWKKASSKHIMQWISPWSNGFPGWHLECTTMSRKYLGNLFDIHGGGMDLIFPHHECEIAQKVASTGYEGVKYWMHNNMVTVNGQKMGKSSNNFINLEQLFNGTNPLLIQSYNPMTVRFFILQSHYRNTIDFSNKALQASKKGLSRLLEANNNIKQLTAQTTNSTVNIEGLRNKSIEAMNDDLNTPIIISYLFEATRIVNSALAKQTQLTTEDIQQLKDFFQLFLFNLLGIKDELKYKNTSYNSFAKAVDLLLQIRVQAKQEKNWIFADKIRDELTVLGFEVKDTKNGFEWKLSK.

Cys31 lines the Zn(2+) pocket. The 'HIGH' region motif lies at 33–43 (PTVYGDPHLGH). 3 residues coordinate Zn(2+): Cys226, His251, and Glu255. The short motif at 283–287 (KMGKS) is the 'KMSKS' region element. Lys286 contributes to the ATP binding site.

It belongs to the class-I aminoacyl-tRNA synthetase family. Monomer. It depends on Zn(2+) as a cofactor.

Its subcellular location is the cytoplasm. It catalyses the reaction tRNA(Cys) + L-cysteine + ATP = L-cysteinyl-tRNA(Cys) + AMP + diphosphate. This chain is Cysteine--tRNA ligase, found in Azobacteroides pseudotrichonymphae genomovar. CFP2.